The sequence spans 146 residues: Fluoride-specific ion channel FluC (146 aa).

4 consecutive transmembrane segments (helical) span residues 8 to 28 (FAIALGGSIGAVLRYLITLTV), 47 to 67 (LANLLGCCALGGLFQFSQALV), 91 to 111 (IGVLGSLTTFSTLIGETAVFA), and 121 to 141 (MLLGINVIAGWCLFWAAAAVV). Residues glycine 95 and threonine 98 each contribute to the Na(+) site.

Belongs to the fluoride channel Fluc/FEX (TC 1.A.43) family.

Its subcellular location is the cell inner membrane. It carries out the reaction fluoride(in) = fluoride(out). With respect to regulation, na(+) is not transported, but it plays an essential structural role and its presence is essential for fluoride channel function. Its function is as follows. Fluoride-specific ion channel. Important for reducing fluoride concentration in the cell, thus reducing its toxicity. The sequence is that of Fluoride-specific ion channel FluC from Rhodopirellula baltica (strain DSM 10527 / NCIMB 13988 / SH1).